A 139-amino-acid polypeptide reads, in one-letter code: Nucleoside diphosphate kinase (139 aa).

ATP-binding residues include Lys-10, Phe-58, Arg-86, Thr-92, Arg-103, and Asn-113. Residue His-116 is the Pros-phosphohistidine intermediate of the active site.

Belongs to the NDK family. Homotetramer. Mg(2+) serves as cofactor.

The protein resides in the cytoplasm. The catalysed reaction is a 2'-deoxyribonucleoside 5'-diphosphate + ATP = a 2'-deoxyribonucleoside 5'-triphosphate + ADP. It carries out the reaction a ribonucleoside 5'-diphosphate + ATP = a ribonucleoside 5'-triphosphate + ADP. Functionally, major role in the synthesis of nucleoside triphosphates other than ATP. The ATP gamma phosphate is transferred to the NDP beta phosphate via a ping-pong mechanism, using a phosphorylated active-site intermediate. This Nitratidesulfovibrio vulgaris (strain ATCC 29579 / DSM 644 / CCUG 34227 / NCIMB 8303 / VKM B-1760 / Hildenborough) (Desulfovibrio vulgaris) protein is Nucleoside diphosphate kinase.